The sequence spans 265 residues: Nitrogenase vanadium-iron protein alpha chain (265 aa).

2 residues coordinate [8Fe-7S] cluster: C17 and C80. [7Fe-V-9S-C-homocitryl] cluster is bound at residue C199.

It belongs to the NifD/NifK/NifE/NifN family. Hexamer of two alpha, two beta, and two delta chains. [8Fe-7S] cluster is required as a cofactor. [7Fe-V-9S-C-homocitryl] cluster serves as cofactor.

It catalyses the reaction N2 + 8 reduced [2Fe-2S]-[ferredoxin] + 16 ATP + 16 H2O = H2 + 8 oxidized [2Fe-2S]-[ferredoxin] + 2 NH4(+) + 16 ADP + 16 phosphate + 6 H(+). This vanadium-iron protein is part of the nitrogenase complex that catalyzes the key enzymatic reactions in nitrogen fixation. This Azorhizophilus paspali (Azotobacter paspali) protein is Nitrogenase vanadium-iron protein alpha chain (vnfD).